A 178-amino-acid polypeptide reads, in one-letter code: Bifunctional protein PyrR (178 aa).

A PRPP-binding motif is present at residues 99-111 (VIIVDDVLYTCRT).

The protein belongs to the purine/pyrimidine phosphoribosyltransferase family. PyrR subfamily. In terms of assembly, homodimer and homohexamer; in equilibrium.

The enzyme catalyses UMP + diphosphate = 5-phospho-alpha-D-ribose 1-diphosphate + uracil. Its function is as follows. Regulates transcriptional attenuation of the pyrimidine nucleotide (pyr) operon by binding in a uridine-dependent manner to specific sites on pyr mRNA. This disrupts an antiterminator hairpin in the RNA and favors formation of a downstream transcription terminator, leading to a reduced expression of downstream genes. Functionally, also displays a weak uracil phosphoribosyltransferase activity which is not physiologically significant. This Clostridium perfringens (strain ATCC 13124 / DSM 756 / JCM 1290 / NCIMB 6125 / NCTC 8237 / Type A) protein is Bifunctional protein PyrR.